A 318-amino-acid polypeptide reads, in one-letter code: NADH-ubiquinone oxidoreductase chain 1 (318 aa).

The next 8 membrane-spanning stretches (helical) occupy residues 5–25 (IISS…LTLI), 69–89 (SIFL…ILWI), 102–122 (LGLM…LTSG), 148–168 (LGLM…KLFI), 174–194 (IWLL…TLAE), 215–235 (VEFS…NILF), 253–273 (LYFS…FLWV), and 293–313 (FLPI…FFGV).

This sequence belongs to the complex I subunit 1 family.

Its subcellular location is the mitochondrion inner membrane. It carries out the reaction a ubiquinone + NADH + 5 H(+)(in) = a ubiquinol + NAD(+) + 4 H(+)(out). Core subunit of the mitochondrial membrane respiratory chain NADH dehydrogenase (Complex I) that is believed to belong to the minimal assembly required for catalysis. Complex I functions in the transfer of electrons from NADH to the respiratory chain. The immediate electron acceptor for the enzyme is believed to be ubiquinone. This chain is NADH-ubiquinone oxidoreductase chain 1 (MT-ND1), found in Myxine glutinosa (Atlantic hagfish).